A 368-amino-acid polypeptide reads, in one-letter code: Multifunctional CCA protein (368 aa).

ATP is bound by residues G8 and R11. G8 and R11 together coordinate CTP. The Mg(2+) site is built by D21 and D23. Residues R91, R137, and R140 each coordinate ATP. CTP-binding residues include R91, R137, and R140.

The protein belongs to the tRNA nucleotidyltransferase/poly(A) polymerase family. Bacterial CCA-adding enzyme type 1 subfamily. In terms of assembly, monomer. Can also form homodimers and oligomers. Requires Mg(2+) as cofactor. Ni(2+) is required as a cofactor.

The catalysed reaction is a tRNA precursor + 2 CTP + ATP = a tRNA with a 3' CCA end + 3 diphosphate. The enzyme catalyses a tRNA with a 3' CCA end + 2 CTP + ATP = a tRNA with a 3' CCACCA end + 3 diphosphate. Its function is as follows. Catalyzes the addition and repair of the essential 3'-terminal CCA sequence in tRNAs without using a nucleic acid template. Adds these three nucleotides in the order of C, C, and A to the tRNA nucleotide-73, using CTP and ATP as substrates and producing inorganic pyrophosphate. tRNA 3'-terminal CCA addition is required both for tRNA processing and repair. Also involved in tRNA surveillance by mediating tandem CCA addition to generate a CCACCA at the 3' terminus of unstable tRNAs. While stable tRNAs receive only 3'-terminal CCA, unstable tRNAs are marked with CCACCA and rapidly degraded. The chain is Multifunctional CCA protein from Pseudomonas putida (strain ATCC 47054 / DSM 6125 / CFBP 8728 / NCIMB 11950 / KT2440).